A 208-amino-acid polypeptide reads, in one-letter code: Large ribosomal subunit protein uL3 (208 aa).

The segment at 123–147 (RHGQSRGPMAHGSRYHRRPGSMGPV) is disordered.

This sequence belongs to the universal ribosomal protein uL3 family. As to quaternary structure, part of the 50S ribosomal subunit. Forms a cluster with proteins L14 and L19.

In terms of biological role, one of the primary rRNA binding proteins, it binds directly near the 3'-end of the 23S rRNA, where it nucleates assembly of the 50S subunit. The sequence is that of Large ribosomal subunit protein uL3 from Streptococcus gordonii (strain Challis / ATCC 35105 / BCRC 15272 / CH1 / DL1 / V288).